Here is a 183-residue protein sequence, read N- to C-terminus: Large ribosomal subunit protein uL6 (183 aa).

It belongs to the universal ribosomal protein uL6 family. Part of the 50S ribosomal subunit.

In terms of biological role, this protein binds to the 23S rRNA, and is important in its secondary structure. It is located near the subunit interface in the base of the L7/L12 stalk, and near the tRNA binding site of the peptidyltransferase center. The polypeptide is Large ribosomal subunit protein uL6 (Methanococcus aeolicus (strain ATCC BAA-1280 / DSM 17508 / OCM 812 / Nankai-3)).